A 239-amino-acid chain; its full sequence is Sugar fermentation stimulation protein homolog (239 aa).

This sequence belongs to the SfsA family.

The polypeptide is Sugar fermentation stimulation protein homolog (Desulforamulus reducens (strain ATCC BAA-1160 / DSM 100696 / MI-1) (Desulfotomaculum reducens)).